A 638-amino-acid chain; its full sequence is Probable glycerol-3-phosphate dehydrogenase, mitochondrial (638 aa).

Position 100 to 128 (100 to 128 (DLIVIGGGATGTGVALDAQSRGMKVALFE)) interacts with FAD.

The protein belongs to the FAD-dependent glycerol-3-phosphate dehydrogenase family. FAD is required as a cofactor.

The protein resides in the mitochondrion. The enzyme catalyses a quinone + sn-glycerol 3-phosphate = dihydroxyacetone phosphate + a quinol. It participates in polyol metabolism; glycerol degradation via glycerol kinase pathway; glycerone phosphate from sn-glycerol 3-phosphate (anaerobic route): step 1/1. The protein is Probable glycerol-3-phosphate dehydrogenase, mitochondrial of Dictyostelium discoideum (Social amoeba).